Here is a 322-residue protein sequence, read N- to C-terminus: GDSL esterase/lipase At5g03600 (322 aa).

The active-site Nucleophile is Ser21. Residues Asp295 and His298 contribute to the active site.

Belongs to the 'GDSL' lipolytic enzyme family.

The polypeptide is GDSL esterase/lipase At5g03600 (Arabidopsis thaliana (Mouse-ear cress)).